The sequence spans 247 residues: UPF0280 protein MmarC5_0355 (247 aa).

The protein belongs to the UPF0280 family.

The sequence is that of UPF0280 protein MmarC5_0355 from Methanococcus maripaludis (strain C5 / ATCC BAA-1333).